Here is a 142-residue protein sequence, read N- to C-terminus: Large ribosomal subunit protein uL13 (142 aa).

It belongs to the universal ribosomal protein uL13 family. As to quaternary structure, part of the 50S ribosomal subunit.

Functionally, this protein is one of the early assembly proteins of the 50S ribosomal subunit, although it is not seen to bind rRNA by itself. It is important during the early stages of 50S assembly. The protein is Large ribosomal subunit protein uL13 of Caldicellulosiruptor bescii (strain ATCC BAA-1888 / DSM 6725 / KCTC 15123 / Z-1320) (Anaerocellum thermophilum).